Consider the following 170-residue polypeptide: Methanogen homoaconitase small subunit (170 aa).

The short motif at 24 to 27 (YLRT) is the YLRT element.

It belongs to the LeuD family. LeuD type 2 subfamily. As to quaternary structure, heterotetramer of 2 HacA and 2 HacB proteins. Cannot form a complex with LeuC.

The enzyme catalyses (2R)-homocitrate = (2R,3S)-homoisocitrate. It catalyses the reaction (2R)-homocitrate = cis-homoaconitate + H2O. The catalysed reaction is (2R,3S)-homoisocitrate = cis-homoaconitate + H2O. It carries out the reaction cis-(homo)2aconitate + H2O = (2R,3S)-iso(homo)2citrate. The enzyme catalyses cis-(homo)3aconitate + H2O = (2R,3S)-iso(homo)3citrate. It catalyses the reaction (R)-malate = maleate + H2O. The catalysed reaction is cis-aconitate + H2O = D-threo-isocitrate. The protein operates within organic acid metabolism; 2-oxosuberate biosynthesis. In terms of biological role, component of a hydro-lyase with broad substrate specificity for cis-unsaturated tricarboxylic acids. Catalyzes both the reversible dehydration of (R)-homocitrate ((R)-2-hydroxybutane-1,2,4-tricarboxylate) to produce cis-homoaconitate ((Z)-but-1-ene-1,2,4-tricarboxylate), and its hydration to homoisocitrate ((1R,2S)-1-hydroxybutane-1,2,4-tricarboxylate). Is also able to hydrate the analogous longer chain substrates cis-homo(2)-aconitate, cis-homo(3)-aconitate, and even the non-physiological cis-homo(4)-aconitate with similar efficiency. These reactions are part of the biosynthesis pathway of coenzyme B. Can also catalyze the hydration of maleate to (R)-malate, and that of cis-aconitate. Cannot catalyze the hydration of citraconate and the dehydration of (S)-homocitrate, citramalate, 2-isopropylmalate, 3-isopropylmalate, citrate or threo-DL-isocitrate. This chain is Methanogen homoaconitase small subunit (hacB), found in Methanocaldococcus jannaschii (strain ATCC 43067 / DSM 2661 / JAL-1 / JCM 10045 / NBRC 100440) (Methanococcus jannaschii).